The primary structure comprises 175 residues: UPF0398 protein SGO_0588 (175 aa).

This sequence belongs to the UPF0398 family.

In Streptococcus gordonii (strain Challis / ATCC 35105 / BCRC 15272 / CH1 / DL1 / V288), this protein is UPF0398 protein SGO_0588.